Here is a 401-residue protein sequence, read N- to C-terminus: Argininosuccinate synthase (401 aa).

9 to 17 provides a ligand contact to ATP; that stretch reads AYSGGLDTS. Residue tyrosine 86 participates in L-citrulline binding. Glycine 116 provides a ligand contact to ATP. Threonine 118, asparagine 122, and aspartate 123 together coordinate L-aspartate. Asparagine 122 provides a ligand contact to L-citrulline. 5 residues coordinate L-citrulline: arginine 126, serine 174, serine 183, glutamate 259, and tyrosine 271.

The protein belongs to the argininosuccinate synthase family. Type 1 subfamily. In terms of assembly, homotetramer.

It localises to the cytoplasm. It carries out the reaction L-citrulline + L-aspartate + ATP = 2-(N(omega)-L-arginino)succinate + AMP + diphosphate + H(+). Its pathway is amino-acid biosynthesis; L-arginine biosynthesis; L-arginine from L-ornithine and carbamoyl phosphate: step 2/3. The chain is Argininosuccinate synthase from Bacillus cereus (strain AH820).